Here is a 212-residue protein sequence, read N- to C-terminus: Small ribosomal subunit protein uS5 (212 aa).

The 64-residue stretch at 48 to 111 (LEDEVLDINM…DIAKLNIIDV (64 aa)) folds into the S5 DRBM domain.

The protein belongs to the universal ribosomal protein uS5 family. As to quaternary structure, part of the 30S ribosomal subunit. Contacts protein S4.

Functionally, with S4 and S12 plays an important role in translational accuracy. In Haloarcula marismortui (strain ATCC 43049 / DSM 3752 / JCM 8966 / VKM B-1809) (Halobacterium marismortui), this protein is Small ribosomal subunit protein uS5.